A 590-amino-acid polypeptide reads, in one-letter code: Sperm-associated microtubule inner protein 4 (590 aa).

At Thr219 the chain carries Phosphothreonine. A phosphoserine mark is found at Ser407 and Ser422. Residue Lys427 forms a Glycyl lysine isopeptide (Lys-Gly) (interchain with G-Cter in SUMO2) linkage. Tyr442 bears the Phosphotyrosine mark. Ser485 bears the Phosphoserine mark. A Glycyl lysine isopeptide (Lys-Gly) (interchain with G-Cter in SUMO2) cross-link involves residue Lys545. Ser547 is modified (phosphoserine).

Predominantly expressed in the testes.

Its subcellular location is the cytoplasm. The protein resides in the cytoskeleton. It localises to the microtubule organizing center. It is found in the centrosome. The protein localises to the flagellum axoneme. Its function is as follows. Microtubule inner protein (MIP) part of the dynein-decorated doublet microtubules (DMTs) in flagellum axoneme. May serve to reinforce and thus stabilize the microtubule structure in the sperm flagella. The polypeptide is Sperm-associated microtubule inner protein 4 (Homo sapiens (Human)).